Reading from the N-terminus, the 277-residue chain is 4-hydroxy-tetrahydrodipicolinate reductase (277 aa).

9-14 (GATGRM) is a binding site for NAD(+). NADP(+) is bound at residue Lys-37. 75-77 (GTS) contacts NAD(+). His-132 functions as the Proton donor/acceptor in the catalytic mechanism. The active-site Proton donor is Lys-136. A (S)-2,3,4,5-tetrahydrodipicolinate-binding site is contributed by 142–143 (GT). Disordered stretches follow at residues 154 to 173 (ARGA…ARGQ) and 247 to 277 (ERAA…VTSA). Over residues 250–265 (AQAAAGDAPSGPVDDG) the composition is skewed to low complexity.

This sequence belongs to the DapB family.

The protein localises to the cytoplasm. It catalyses the reaction (S)-2,3,4,5-tetrahydrodipicolinate + NAD(+) + H2O = (2S,4S)-4-hydroxy-2,3,4,5-tetrahydrodipicolinate + NADH + H(+). It carries out the reaction (S)-2,3,4,5-tetrahydrodipicolinate + NADP(+) + H2O = (2S,4S)-4-hydroxy-2,3,4,5-tetrahydrodipicolinate + NADPH + H(+). It functions in the pathway amino-acid biosynthesis; L-lysine biosynthesis via DAP pathway; (S)-tetrahydrodipicolinate from L-aspartate: step 4/4. Functionally, catalyzes the conversion of 4-hydroxy-tetrahydrodipicolinate (HTPA) to tetrahydrodipicolinate. The protein is 4-hydroxy-tetrahydrodipicolinate reductase of Clavibacter michiganensis subsp. michiganensis (strain NCPPB 382).